Reading from the N-terminus, the 185-residue chain is Protein GrpE (185 aa).

This sequence belongs to the GrpE family. Homodimer.

Its subcellular location is the cytoplasm. Its function is as follows. Participates actively in the response to hyperosmotic and heat shock by preventing the aggregation of stress-denatured proteins, in association with DnaK and GrpE. It is the nucleotide exchange factor for DnaK and may function as a thermosensor. Unfolded proteins bind initially to DnaJ; upon interaction with the DnaJ-bound protein, DnaK hydrolyzes its bound ATP, resulting in the formation of a stable complex. GrpE releases ADP from DnaK; ATP binding to DnaK triggers the release of the substrate protein, thus completing the reaction cycle. Several rounds of ATP-dependent interactions between DnaJ, DnaK and GrpE are required for fully efficient folding. The sequence is that of Protein GrpE from Methanobrevibacter smithii (strain ATCC 35061 / DSM 861 / OCM 144 / PS).